The sequence spans 226 residues: Leucyl/phenylalanyl-tRNA--protein transferase (226 aa).

This sequence belongs to the L/F-transferase family.

It localises to the cytoplasm. The catalysed reaction is N-terminal L-lysyl-[protein] + L-leucyl-tRNA(Leu) = N-terminal L-leucyl-L-lysyl-[protein] + tRNA(Leu) + H(+). It catalyses the reaction N-terminal L-arginyl-[protein] + L-leucyl-tRNA(Leu) = N-terminal L-leucyl-L-arginyl-[protein] + tRNA(Leu) + H(+). The enzyme catalyses L-phenylalanyl-tRNA(Phe) + an N-terminal L-alpha-aminoacyl-[protein] = an N-terminal L-phenylalanyl-L-alpha-aminoacyl-[protein] + tRNA(Phe). Functionally, functions in the N-end rule pathway of protein degradation where it conjugates Leu, Phe and, less efficiently, Met from aminoacyl-tRNAs to the N-termini of proteins containing an N-terminal arginine or lysine. The sequence is that of Leucyl/phenylalanyl-tRNA--protein transferase from Bradyrhizobium sp. (strain ORS 278).